A 1383-amino-acid chain; its full sequence is DNA-directed RNA polymerase subunit beta (1383 aa).

This sequence belongs to the RNA polymerase beta chain family. In terms of assembly, the RNAP catalytic core consists of 2 alpha, 1 beta, 1 beta' and 1 omega subunit. When a sigma factor is associated with the core the holoenzyme is formed, which can initiate transcription.

It carries out the reaction RNA(n) + a ribonucleoside 5'-triphosphate = RNA(n+1) + diphosphate. Functionally, DNA-dependent RNA polymerase catalyzes the transcription of DNA into RNA using the four ribonucleoside triphosphates as substrates. The protein is DNA-directed RNA polymerase subunit beta of Bartonella henselae (strain ATCC 49882 / DSM 28221 / CCUG 30454 / Houston 1) (Rochalimaea henselae).